The following is a 709-amino-acid chain: Ribosomal RNA large subunit methyltransferase K/L (709 aa).

Residues 43–154 (LAYRITLWTR…NGVITIAMNF (112 aa)) enclose the THUMP domain.

Belongs to the methyltransferase superfamily. RlmKL family.

Its subcellular location is the cytoplasm. It carries out the reaction guanosine(2445) in 23S rRNA + S-adenosyl-L-methionine = N(2)-methylguanosine(2445) in 23S rRNA + S-adenosyl-L-homocysteine + H(+). It catalyses the reaction guanosine(2069) in 23S rRNA + S-adenosyl-L-methionine = N(2)-methylguanosine(2069) in 23S rRNA + S-adenosyl-L-homocysteine + H(+). Specifically methylates the guanine in position 2445 (m2G2445) and the guanine in position 2069 (m7G2069) of 23S rRNA. This Shewanella baltica (strain OS195) protein is Ribosomal RNA large subunit methyltransferase K/L.